The chain runs to 1804 residues: Vacuolar membrane-associated protein IML1 (1804 aa).

Over residues methionine 1 to lysine 13 the composition is skewed to polar residues. Disordered regions lie at residues methionine 1 to glutamate 65, asparagine 169 to isoleucine 204, threonine 723 to proline 797, and glutamate 866 to asparagine 892. Over residues arginine 14 to asparagine 27 the composition is skewed to basic and acidic residues. 2 stretches are compositionally biased toward polar residues: residues tyrosine 185–isoleucine 204 and threonine 723–isoleucine 749. Over residues leucine 779–phenylalanine 789 the composition is skewed to basic and acidic residues. Polar residues predominate over residues glutamate 866–serine 878. Over residues lysine 879–asparagine 892 the composition is skewed to basic and acidic residues. The DEP domain maps to glycine 1414–proline 1489. Positions threonine 1501–threonine 1528 are disordered. Positions serine 1503–lysine 1516 are enriched in low complexity.

Belongs to the IML1 family.

The protein localises to the vacuole membrane. The polypeptide is Vacuolar membrane-associated protein IML1 (IML1) (Candida glabrata (strain ATCC 2001 / BCRC 20586 / JCM 3761 / NBRC 0622 / NRRL Y-65 / CBS 138) (Yeast)).